A 296-amino-acid polypeptide reads, in one-letter code: MPDPTSPKPDWLKVRLPRTDKYGAVKDVIKKYNLNTVCSSAMCPNAFECWDGGCLTFMVLGNTCTRACRFCTVTHGPAGEPLDSNEPQRLAAAAKELDLSYVVITSVDRDDLPDYGAGHYAACIRAVKEQLPGARVEAIIPDFTGRLDLLEQVVDARPDVISHNIETVERLSPSVRDRRAGYYRSLDVLRDVKRVNPHMLTKSSLLLGMGEEDIEIKEALHDLQEARVDIVTLGQYLRPSIRQWPVHRYVAPGEFSELAEYGRSLGFKYVAAGPFVRTSYRAGEQYVSVIADSRMA.

Positions 38, 43, 49, 64, 68, 71, and 279 each coordinate [4Fe-4S] cluster. The Radical SAM core domain occupies 50–268 (WDGGCLTFMV…AEYGRSLGFK (219 aa)).

The protein belongs to the radical SAM superfamily. Lipoyl synthase family. It depends on [4Fe-4S] cluster as a cofactor.

The protein resides in the cytoplasm. The catalysed reaction is [[Fe-S] cluster scaffold protein carrying a second [4Fe-4S](2+) cluster] + N(6)-octanoyl-L-lysyl-[protein] + 2 oxidized [2Fe-2S]-[ferredoxin] + 2 S-adenosyl-L-methionine + 4 H(+) = [[Fe-S] cluster scaffold protein] + N(6)-[(R)-dihydrolipoyl]-L-lysyl-[protein] + 4 Fe(3+) + 2 hydrogen sulfide + 2 5'-deoxyadenosine + 2 L-methionine + 2 reduced [2Fe-2S]-[ferredoxin]. Its pathway is protein modification; protein lipoylation via endogenous pathway; protein N(6)-(lipoyl)lysine from octanoyl-[acyl-carrier-protein]: step 2/2. Its function is as follows. Catalyzes the radical-mediated insertion of two sulfur atoms into the C-6 and C-8 positions of the octanoyl moiety bound to the lipoyl domains of lipoate-dependent enzymes, thereby converting the octanoylated domains into lipoylated derivatives. In Methanocella arvoryzae (strain DSM 22066 / NBRC 105507 / MRE50), this protein is Lipoyl synthase.